Consider the following 783-residue polypeptide: MKKFNQTFSSVKDLIGNKKETLTEFPDYIYKTKSLEDLKGYTRTLNLKLTKHSKTNQLLIEENKQLSEQILLYSNLFINNEESSLNVCEPLSNVFKIVGEMINEIENYRQTFEQSISQKWLQQLNEYGKSDCKDGQLAKNRFDKARLSFDEASEQFKQLRKKQNNINNEKLLEAEEDLDYATQQFSDIASESLQTMDDIIVKHNLDSFESASSTIQSYKDFFQKGLDHCLSVQSDLEIQKHAMSKYKQQLLEKKKLRSTVVQFEQTNSSRTISLPPPPPPKPTSSTPSSSPSPSPSSSIINIHNNYIAMPKGNTKVFGMALSTITEREKSDIPMIIDKSIQFLLLEENITQEGIFRVSPNQKQLTDLKNNVNAGYITTLDGIDDAHLISSFVKAFLREMPIPLFTFDLYHSLVDCVINEEKYDCDKIKISNAIVLVLQKLPKPNFLLAKSLISLLWKISTKSSQNKMTTSNLAVTVAPNVLYPKLLDIRSLTNANATIEFIISNFNNIFNNQLISNLYNNSCGVSGGSSGGGGGGGSSGGVANPRHSVLPPSLPARPQSVMFKNTPLSVNTSSSQSSSSSSSSSFASSASPPPTPTKPPSSSSSPIITTTSPNSNTNINSNTSVNTNINPRHSVLPPSLPPKKISSSSNSLPSPPPPSSPSIPEKSQNNITPTILSSSLSAPTSPTTTTTTNPLRSSTGSPKPISNRVSMYLQNSNTGVPLPSQKPQRVISNNNTTTNSRPLSNSLDLPPPLAPVGMPLETLEPIQRNLTSNEAITISEVNWN.

Residues 138-188 (AKNRFDKARLSFDEASEQFKQLRKKQNNINNEKLLEAEEDLDYATQQFSDI) adopt a coiled-coil conformation. The interval 262-299 (QFEQTNSSRTISLPPPPPPKPTSSTPSSSPSPSPSSSI) is disordered. The span at 283-299 (TSSTPSSSPSPSPSSSI) shows a compositional bias: low complexity. The 191-residue stretch at 319 to 509 (MALSTITERE…FIISNFNNIF (191 aa)) folds into the Rho-GAP domain. Residues 527–539 (GSSGGGGGGGSSG) are compositionally biased toward gly residues. The interval 527–745 (GSSGGGGGGG…TTNSRPLSNS (219 aa)) is disordered. 4 stretches are compositionally biased toward low complexity: residues 568 to 589 (SVNT…ASSA), 599 to 630 (PSSS…NINP), 641 to 651 (PKKISSSSNSL), and 661 to 698 (SIPE…RSST). Residues 706 to 738 (NRVSMYLQNSNTGVPLPSQKPQRVISNNNTTTN) are compositionally biased toward polar residues.

The protein localises to the cytoplasm. In terms of biological role, rho GTPase-activating protein involved in the signal transduction pathway. The protein is Rho GTPase-activating protein gacR (gacR) of Dictyostelium discoideum (Social amoeba).